The sequence spans 480 residues: Glycogen synthase (480 aa).

Position 15 (Lys15) interacts with ADP-alpha-D-glucose.

This sequence belongs to the glycosyltransferase 1 family. Bacterial/plant glycogen synthase subfamily.

It carries out the reaction [(1-&gt;4)-alpha-D-glucosyl](n) + ADP-alpha-D-glucose = [(1-&gt;4)-alpha-D-glucosyl](n+1) + ADP + H(+). It participates in glycan biosynthesis; glycogen biosynthesis. Synthesizes alpha-1,4-glucan chains using ADP-glucose. The sequence is that of Glycogen synthase from Opitutus terrae (strain DSM 11246 / JCM 15787 / PB90-1).